The following is a 453-amino-acid chain: Adenosylmethionine-8-amino-7-oxononanoate aminotransferase (453 aa).

G118 to S119 contacts pyridoxal 5'-phosphate. Substrate is bound at residue Y151. Residue D258 participates in pyridoxal 5'-phosphate binding. K287, G322, and R417 together coordinate substrate. K287 carries the N6-(pyridoxal phosphate)lysine modification.

The protein belongs to the class-III pyridoxal-phosphate-dependent aminotransferase family. BioA subfamily. In terms of assembly, homodimer. Pyridoxal 5'-phosphate is required as a cofactor.

The protein resides in the cytoplasm. It catalyses the reaction (8S)-8-amino-7-oxononanoate + S-adenosyl-L-methionine = S-adenosyl-4-methylsulfanyl-2-oxobutanoate + (7R,8S)-7,8-diammoniononanoate. It participates in cofactor biosynthesis; biotin biosynthesis; 7,8-diaminononanoate from 8-amino-7-oxononanoate (SAM route): step 1/1. Functionally, catalyzes the transfer of the alpha-amino group from S-adenosyl-L-methionine (SAM) to 7-keto-8-aminopelargonic acid (KAPA) to form 7,8-diaminopelargonic acid (DAPA). It is the only aminotransferase known to utilize SAM as an amino donor. The polypeptide is Adenosylmethionine-8-amino-7-oxononanoate aminotransferase (Geobacter sulfurreducens (strain ATCC 51573 / DSM 12127 / PCA)).